The following is a 522-amino-acid chain: BTB/POZ domain-containing protein 3 (522 aa).

Residues Arg25–Lys44 are disordered. A compositionally biased stretch (low complexity) spans Lys32–Lys44. One can recognise a BTB domain in the interval Ala120–Ala190. The 66-residue stretch at Phe235–Gln300 folds into the BACK domain.

The protein localises to the cytoplasm. It localises to the cytosol. It is found in the nucleus. In terms of biological role, acts as a key regulator of dendritic field orientation during development of sensory cortex. Also directs dendrites toward active axon terminals when ectopically expressed. This is BTB/POZ domain-containing protein 3 (BTBD3) from Homo sapiens (Human).